Consider the following 274-residue polypeptide: Diaminopimelate epimerase (274 aa).

Substrate-binding residues include N11, Q44, and N64. C73 serves as the catalytic Proton donor. Residues 74 to 75 (GN), N157, N190, and 208 to 209 (ER) each bind substrate. Residue C217 is the Proton acceptor of the active site. A substrate-binding site is contributed by 218-219 (GS).

Belongs to the diaminopimelate epimerase family. Homodimer.

It localises to the cytoplasm. It carries out the reaction (2S,6S)-2,6-diaminopimelate = meso-2,6-diaminopimelate. It functions in the pathway amino-acid biosynthesis; L-lysine biosynthesis via DAP pathway; DL-2,6-diaminopimelate from LL-2,6-diaminopimelate: step 1/1. Its function is as follows. Catalyzes the stereoinversion of LL-2,6-diaminopimelate (L,L-DAP) to meso-diaminopimelate (meso-DAP), a precursor of L-lysine and an essential component of the bacterial peptidoglycan. The sequence is that of Diaminopimelate epimerase from Haemophilus influenzae (strain PittGG).